A 59-amino-acid chain; its full sequence is UPF0181 protein YoaH (59 aa).

Belongs to the UPF0181 family.

This Escherichia coli O127:H6 (strain E2348/69 / EPEC) protein is UPF0181 protein YoaH.